The sequence spans 288 residues: Aquaporin PIP1-5 (288 aa).

Positions 1-36 are disordered; sequence MEGKEEDVRLGANRYSERQPIGTAAQGTEEKDYKEP. 2 helical membrane passes run 57 to 77 and 92 to 114; these read IAEF…VMGV and IAWS…SGGH. An NPA 1 motif is present at residues 116 to 118; it reads NPA. Transmembrane regions (helical) follow at residues 135-155, 177-197, and 211-231; these read LFYM…VKGF, GDGL…VFSA, and ILAP…TIPI. The NPA 2 signature appears at 237–239; it reads NPA. Residues 259-279 form a helical membrane-spanning segment; the sequence is IFWVGPFIGAALAAIYHVVII.

It belongs to the MIP/aquaporin (TC 1.A.8) family. PIP (TC 1.A.8.11) subfamily. In terms of tissue distribution, highly expressed in roots and at lower levels in anthers and silks.

It is found in the cell membrane. Its function is as follows. Water channel required to facilitate the transport of water across cell membrane. In Zea mays (Maize), this protein is Aquaporin PIP1-5 (PIP1-5).